Consider the following 124-residue polypeptide: Fluoride-specific ion channel FluC (124 aa).

3 helical membrane passes run 5–27 (LFVA…FMLQ), 70–90 (VGLL…LLLI), and 95–115 (WIKA…MVYL). Na(+) contacts are provided by G74 and T77.

The protein belongs to the fluoride channel Fluc/FEX (TC 1.A.43) family.

Its subcellular location is the cell inner membrane. The enzyme catalyses fluoride(in) = fluoride(out). Its activity is regulated as follows. Na(+) is not transported, but it plays an essential structural role and its presence is essential for fluoride channel function. In terms of biological role, fluoride-specific ion channel. Important for reducing fluoride concentration in the cell, thus reducing its toxicity. This is Fluoride-specific ion channel FluC from Shewanella sediminis (strain HAW-EB3).